The chain runs to 499 residues: Cytochrome P450 monooxygenase notH' (499 aa).

Residues 11 to 31 traverse the membrane as a helical segment; sequence LGLEPAGWALALLTSSIIYLF. 2 N-linked (GlcNAc...) asparagine glycosylation sites follow: N296 and N427. C440 lines the heme pocket.

The protein belongs to the cytochrome P450 family. Heme is required as a cofactor.

It localises to the membrane. It functions in the pathway alkaloid biosynthesis. Cytochrome P450 monooxygenase; part of the gene cluster that mediates the biosynthesis of notoamide, a fungal indole alkaloid that belongs to a family of natural products containing a characteristic bicyclo[2.2.2]diazaoctane core. The first step of notoamide biosynthesis involves coupling of L-proline and L-tryptophan by the bimodular NRPS notE', to produce cyclo-L-tryptophan-L-proline called brevianamide F. The reverse prenyltransferase notF' then acts as a deoxybrevianamide E synthase and converts brevianamide F to deoxybrevianamide E via reverse prenylation at C-2 of the indole ring leading to the bicyclo[2.2.2]diazaoctane core. Deoxybrevianamide E is further hydroxylated at C-6 of the indole ring, likely catalyzed by the cytochrome P450 monooxygenase notG', to yield 6-hydroxy-deoxybrevianamide E. 6-hydroxy-deoxybrevianamide E is a specific substrate of the prenyltransferase notC' for normal prenylation at C-7 to produce 6-hydroxy-7-prenyl-deoxybrevianamide, also called notoamide S. As the proposed pivotal branching point in notoamide biosynthesis, notoamide S can be diverted to notoamide E through an oxidative pyran ring closure putatively catalyzed by either notH' cytochrome P450 monooxygenase or the notD' FAD-linked oxidoreductase. This step would be followed by an indole 2,3-epoxidation-initiated pinacol-like rearrangement catalyzed by the notB' FAD-dependent monooxygenase leading to the formation of notoamide C and notoamide D. On the other hand notoamide S is converted to notoamide T by notH' (or notD'), a bifunctional oxidase that also functions as the intramolecular Diels-Alderase responsible for generation of (-)-notoamide T. To generate antipodal (+)-notoaminide T, notH (or notD) in Aspergillus strain MF297-2 is expected to catalyze a Diels-Alder reaction leading to the opposite stereochemistry. The remaining oxidoreductase notD' (or notH') likely catalyzes the oxidative pyran ring formation to yield (-)-stephacidin A. The FAD-dependent monooxygenase notI' is highly similar to notB' and is predicted to catalyze a similar conversion from (-)-stephacidin A to (+)-notoamide B via the 2,3-epoxidation of (-)-stephacidin A followed by a pinacol-type rearrangement. Finally, it remains unclear which enzyme could be responsible for the final hydroxylation steps leading to notoamide A and sclerotiamide. This Aspergillus versicolor protein is Cytochrome P450 monooxygenase notH'.